A 633-amino-acid chain; its full sequence is Chaperone protein dnaK2 (633 aa).

A Phosphothreonine; by autocatalysis modification is found at T197. Residues 513–532 (AEQNASSDKERREKIERKNQ) show a composition bias toward basic and acidic residues. 2 disordered regions span residues 513 to 534 (AEQNASSDKERREKIERKNQAD) and 598 to 633 (QQAGGGAAPGAAPQDGGTTSSDGGDDVIDADFTETK). The segment covering 606-619 (PGAAPQDGGTTSSD) has biased composition (low complexity). Residues 620 to 633 (GGDDVIDADFTETK) show a composition bias toward acidic residues.

The protein belongs to the heat shock protein 70 family.

In terms of biological role, acts as a chaperone. This Nostoc sp. (strain PCC 7120 / SAG 25.82 / UTEX 2576) protein is Chaperone protein dnaK2 (dnaK2).